A 430-amino-acid polypeptide reads, in one-letter code: Trigger factor (430 aa).

The 86-residue stretch at 157 to 242 (GDLVALETWS…AVEVSEPVLP (86 aa)) folds into the PPIase FKBP-type domain.

Belongs to the FKBP-type PPIase family. Tig subfamily.

It localises to the cytoplasm. It carries out the reaction [protein]-peptidylproline (omega=180) = [protein]-peptidylproline (omega=0). Its function is as follows. Involved in protein export. Acts as a chaperone by maintaining the newly synthesized protein in an open conformation. Functions as a peptidyl-prolyl cis-trans isomerase. The polypeptide is Trigger factor (Xanthomonas campestris pv. campestris (strain ATCC 33913 / DSM 3586 / NCPPB 528 / LMG 568 / P 25)).